Consider the following 150-residue polypeptide: FAD synthase (150 aa).

Residues 16–17 (VF), 21–24 (HVGH), and D102 each bind ATP.

Belongs to the archaeal FAD synthase family. In terms of assembly, homodimer. Requires a divalent metal cation as cofactor.

It catalyses the reaction FMN + ATP + H(+) = FAD + diphosphate. It functions in the pathway cofactor biosynthesis; FAD biosynthesis; FAD from FMN: step 1/1. In terms of biological role, catalyzes the transfer of the AMP portion of ATP to flavin mononucleotide (FMN) to produce flavin adenine dinucleotide (FAD) coenzyme. This is FAD synthase from Thermococcus onnurineus (strain NA1).